A 105-amino-acid polypeptide reads, in one-letter code: Dicamba O-demethylase, ferredoxin component (105 aa).

In terms of domain architecture, 2Fe-2S ferredoxin-type spans 2 to 105 (PQITVVNQSG…GIKVTIAQED (104 aa)). Cysteine 40, cysteine 46, cysteine 49, and cysteine 86 together coordinate [2Fe-2S] cluster.

This sequence belongs to the adrenodoxin/putidaredoxin family. As to quaternary structure, monomer. The dicamba O-demethylase multicomponent enzyme system is composed of an oxygenase component (DdmC) and an electron transfer component formed by a ferredoxin reductase (DdmA1) and a ferredoxin (DdmB). In vitro, dicamba O-demethylase assays in which DdmA2 is substituted for DdmA1 demonstrate that the two enzymes possess nearly identical activities. [2Fe-2S] cluster serves as cofactor.

Its function is as follows. Component of the dicamba O-demethylase multicomponent enzyme system involved in the degradation of the herbicide dicamba. In vitro, functions as an intermediate electron transfer protein. The polypeptide is Dicamba O-demethylase, ferredoxin component (Stenotrophomonas maltophilia (Pseudomonas maltophilia)).